A 115-amino-acid chain; its full sequence is Large ribosomal subunit protein bL19 (115 aa).

This sequence belongs to the bacterial ribosomal protein bL19 family.

This protein is located at the 30S-50S ribosomal subunit interface and may play a role in the structure and function of the aminoacyl-tRNA binding site. This chain is Large ribosomal subunit protein bL19, found in Escherichia coli O139:H28 (strain E24377A / ETEC).